Here is a 565-residue protein sequence, read N- to C-terminus: Protein priB (565 aa).

A DNA-binding region (zn(2)-C6 fungal-type) is located at residues 20-50 (CTTCRAAKMKCVGAEDGQRQCQRCKRANVQC). Disordered regions lie at residues 82–170 (AKSK…SDRA) and 195–224 (NPED…APAG). Residues 90–111 (DARHSSSYRDSHPSLGEPDDRY) are compositionally biased toward basic and acidic residues. Residues 129-155 (SNLPPLNLPSYPDAASEYTASSTSSRT) are compositionally biased toward low complexity. Polar residues predominate over residues 203-215 (GPSSVRCSETYSP).

It is found in the nucleus. The sequence is that of Protein priB (priB) from Lentinula edodes (Shiitake mushroom).